Here is a 307-residue protein sequence, read N- to C-terminus: Ribosomal RNA small subunit methyltransferase H (307 aa).

Residues 32–34 (GGH), D52, F78, D99, and Q106 contribute to the S-adenosyl-L-methionine site.

The protein belongs to the methyltransferase superfamily. RsmH family.

The protein localises to the cytoplasm. It carries out the reaction cytidine(1402) in 16S rRNA + S-adenosyl-L-methionine = N(4)-methylcytidine(1402) in 16S rRNA + S-adenosyl-L-homocysteine + H(+). Functionally, specifically methylates the N4 position of cytidine in position 1402 (C1402) of 16S rRNA. In Acinetobacter baumannii (strain AB0057), this protein is Ribosomal RNA small subunit methyltransferase H.